A 217-amino-acid polypeptide reads, in one-letter code: GTP-binding protein yptV2 (217 aa).

Residue 20 to 27 coordinates GTP; sequence GDSGVGKS. The Effector region signature appears at 42-50; it reads FITTIGIDF. GTP-binding positions include 68 to 72 and 126 to 129; these read DTAGQ and NKLD. The tract at residues 198 to 217 is disordered; sequence QPVRLTSGSPSPAQGKSCCR. Positions 201–211 are enriched in polar residues; the sequence is RLTSGSPSPAQ. 2 S-geranylgeranyl cysteine lipidation sites follow: Cys-215 and Cys-216.

It belongs to the small GTPase superfamily. Rab family.

Its subcellular location is the cell membrane. Its function is as follows. Protein transport. Probably involved in vesicular traffic. In Volvox carteri (Green alga), this protein is GTP-binding protein yptV2 (YPTV2).